The primary structure comprises 113 residues: Histone H3-8 (113 aa).

A compositionally biased stretch (basic residues) spans 1 to 17 (NTGAKAPRKHLANKAAR). Residues 1-31 (NTGAKAPRKHLANKAARKTAAPANAGIKKPH) are disordered.

It belongs to the histone H3 family. As to quaternary structure, the nucleosome is a histone octamer containing two molecules each of H2A, H2B, H3 and H4 assembled in one H3-H4 heterotetramer and two H2A-H2B heterodimers. The octamer wraps approximately 147 bp of DNA.

It localises to the nucleus. It is found in the chromosome. In terms of biological role, core component of nucleosome. Nucleosomes wrap and compact DNA into chromatin, limiting DNA accessibility to the cellular machineries which require DNA as a template. Histones thereby play a central role in transcription regulation, DNA repair, DNA replication and chromosomal stability. DNA accessibility is regulated via a complex set of post-translational modifications of histones, also called histone code, and nucleosome remodeling. The protein is Histone H3-8 (H3-8) of Stylonychia lemnae (Ciliate).